The sequence spans 458 residues: Glutamyl-tRNA reductase (458 aa).

Substrate-binding positions include 49-52, Ser111, 116-118, and Gln122; these read TCNR and ETE. The active-site Nucleophile is Cys50. 191–196 is an NADP(+) binding site; that stretch reads GAGKMS. Basic and acidic residues-rich tracts occupy residues 426–440 and 448–458; these read IPKDGEEHSSSKEVE and ERGHHESDFHN. The interval 426–458 is disordered; the sequence is IPKDGEEHSSSKEVESVTQSSTERGHHESDFHN.

Belongs to the glutamyl-tRNA reductase family. As to quaternary structure, homodimer.

It carries out the reaction (S)-4-amino-5-oxopentanoate + tRNA(Glu) + NADP(+) = L-glutamyl-tRNA(Glu) + NADPH + H(+). Its pathway is porphyrin-containing compound metabolism; protoporphyrin-IX biosynthesis; 5-aminolevulinate from L-glutamyl-tRNA(Glu): step 1/2. Catalyzes the NADPH-dependent reduction of glutamyl-tRNA(Glu) to glutamate 1-semialdehyde (GSA). This chain is Glutamyl-tRNA reductase, found in Natranaerobius thermophilus (strain ATCC BAA-1301 / DSM 18059 / JW/NM-WN-LF).